The sequence spans 611 residues: Adenosylhomocysteinase 3 (611 aa).

3 stretches are compositionally biased toward low complexity: residues 1 to 14 (MSVQ…AAKV), 36 to 57 (AAVG…APAA), and 68 to 81 (GPAA…GKVP). Residues 1–184 (MSVQVVSAAA…KQQKNSKGSS (184 aa)) form a disordered region. At serine 2 the chain carries N-acetylserine. The segment at 2 to 109 (SVQVVSAAAA…DGGEALVSPD (108 aa)) is LISN domain, inhibits interaction with ITPR1. Residue serine 107 is modified to Phosphoserine. Residues 135 to 144 (RPTKIGRRSL) show a composition bias toward basic residues. A compositionally biased stretch (low complexity) spans 145-164 (SRSISQSSTDSYSSAASYTD). Phosphoserine occurs at positions 149, 152, 155, and 158. Substrate is bound by residues threonine 236, aspartate 310, and glutamate 335. 336 to 338 (SVT) contacts NAD(+). Positions 365 and 369 each coordinate substrate. NAD(+) contacts are provided by residues asparagine 370, 401–406 (GEVGKG), glutamate 422, asparagine 457, 478–479 (MG), and asparagine 525.

The protein belongs to the adenosylhomocysteinase family. Homotetramer. Forms heteromultimers with AHCYL1 (via the C-terminal region). Interacts with ITPR1; with lower affinity than AHCYL1 and maybe via ITPR1. Interacts with SLC4A4. Interacts with ZCCHC4. It depends on NAD(+) as a cofactor. Post-translationally, phosphorylated during neuronal differentiation at the LISN domain.

The protein localises to the cytoplasm. It is found in the microsome. The enzyme catalyses S-adenosyl-L-homocysteine + H2O = L-homocysteine + adenosine. The protein operates within amino-acid biosynthesis; L-homocysteine biosynthesis; L-homocysteine from S-adenosyl-L-homocysteine: step 1/1. In terms of biological role, may regulate the electrogenic sodium/bicarbonate cotransporter SLC4A4 activity and Mg(2+)-sensitivity. On the contrary of its homolog AHCYL1, does not regulate ITPR1 sensitivity to inositol 1,4,5-trisphosphate. This is Adenosylhomocysteinase 3 (AHCYL2) from Homo sapiens (Human).